The chain runs to 104 residues: L-rhamnose mutarotase (104 aa).

Tyrosine 18 is a substrate binding site. The Proton donor role is filled by histidine 22. Substrate is bound by residues tyrosine 41 and 76–77 (WW).

It belongs to the rhamnose mutarotase family. As to quaternary structure, homodimer.

It is found in the cytoplasm. It catalyses the reaction alpha-L-rhamnose = beta-L-rhamnose. The protein operates within carbohydrate metabolism; L-rhamnose metabolism. Involved in the anomeric conversion of L-rhamnose. The polypeptide is L-rhamnose mutarotase (Enterobacter sp. (strain 638)).